We begin with the raw amino-acid sequence, 196 residues long: NADH-quinone oxidoreductase subunit B (196 aa).

The [4Fe-4S] cluster site is built by C75, C76, C140, and C170.

The protein belongs to the complex I 20 kDa subunit family. NDH-1 is composed of 14 different subunits. Subunits NuoB, C, D, E, F, and G constitute the peripheral sector of the complex. Requires [4Fe-4S] cluster as cofactor.

The protein resides in the cell inner membrane. It catalyses the reaction a quinone + NADH + 5 H(+)(in) = a quinol + NAD(+) + 4 H(+)(out). In terms of biological role, NDH-1 shuttles electrons from NADH, via FMN and iron-sulfur (Fe-S) centers, to quinones in the respiratory chain. Couples the redox reaction to proton translocation (for every two electrons transferred, four hydrogen ions are translocated across the cytoplasmic membrane), and thus conserves the redox energy in a proton gradient. The polypeptide is NADH-quinone oxidoreductase subunit B (Caulobacter sp. (strain K31)).